The primary structure comprises 236 residues: Flagellar L-ring protein (236 aa).

Residues 1-24 (MKNKNRLNTIKLLSISLLIAVTTA) form the signal peptide. A lipid anchor (N-palmitoyl cysteine) is attached at C25. C25 is lipidated: S-diacylglycerol cysteine.

Belongs to the FlgH family. The basal body constitutes a major portion of the flagellar organelle and consists of four rings (L,P,S, and M) mounted on a central rod.

Its subcellular location is the cell outer membrane. The protein localises to the bacterial flagellum basal body. Assembles around the rod to form the L-ring and probably protects the motor/basal body from shearing forces during rotation. The chain is Flagellar L-ring protein from Colwellia psychrerythraea (strain 34H / ATCC BAA-681) (Vibrio psychroerythus).